The sequence spans 236 residues: N-alpha-acetyltransferase 40 (236 aa).

Glycine 2 carries N-myristoyl glycine lipidation. The N-acetyltransferase domain maps to 63 to 217; the sequence is SDLDQKTIDW…DCTYEILSKR (155 aa). Substrate is bound by residues tyrosine 85, 127–129, and tyrosine 138; that span reads DVE. Acetyl-CoA-binding positions include 140–142 and 148–153; these read VQL and RKGVGK. Threonine 174 is a binding site for substrate. Asparagine 179 is a binding site for acetyl-CoA. Substrate is bound at residue tyrosine 211.

The protein belongs to the acetyltransferase family. NAA40 subfamily.

Its subcellular location is the cytoplasm. It localises to the nucleus. It catalyses the reaction N-terminal L-seryl-[histone H4] + acetyl-CoA = N-terminal N(alpha)-acetyl-L-seryl-[histone H4] + CoA + H(+). It carries out the reaction N-terminal L-seryl-[histone H2A] + acetyl-CoA = N-terminal N(alpha)-acetyl-L-seryl-[histone H2A] + CoA + H(+). In terms of biological role, N-alpha-acetyltransferase that specifically mediates the acetylation of the N-terminal residues of histones H4 and H2A. In contrast to other N-alpha-acetyltransferase, has a very specific selectivity for histones H4 and H2A N-terminus and specifically recognizes the 'Ser-Gly-Arg-Gly sequence'. This Xenopus laevis (African clawed frog) protein is N-alpha-acetyltransferase 40 (naa40).